A 228-amino-acid chain; its full sequence is Prophenin-2 (228 aa).

Positions methionine 1–alanine 29 are cleaved as a signal peptide. Positions glutamine 30–glutamine 146 are excised as a propeptide. 2 cysteine pairs are disulfide-bonded: cysteine 85–cysteine 96 and cysteine 107–cysteine 124. A run of 7 repeats spans residues phenylalanine 148–arginine 157, phenylalanine 158–arginine 167, phenylalanine 168–arginine 177, phenylalanine 178–arginine 187, phenylalanine 188–proline 197, phenylalanine 198–tryptophan 207, and phenylalanine 208–proline 217. The interval phenylalanine 148–proline 217 is 7 X 10 AA tandem repeats. 2 disordered regions span residues arginine 167 to glycine 195 and tryptophan 207 to arginine 228. At proline 225 the chain carries Proline amide. The propeptide at glycine 226–arginine 228 is removed in mature form.

It belongs to the cathelicidin family.

The protein localises to the secreted. Its function is as follows. Exerts antimicrobial activity. It is more effective against Gram-negative bacteria than Gram-positive bacteria. The sequence is that of Prophenin-2 from Sus scrofa (Pig).